The chain runs to 445 residues: MANSNMKTLHSLEGIGKIQFEGKQSKNPLAFKSYNPSEVIGGKTMKDHLRFSVAYWHTLTADGTDMFGTGTMQRAWDSYSGMDLAKARLEVAFQLFDLLDVPYFSFHDRDIAPEGDTLQETNQHLDIILERMKEYMRDSGVKLLWNTANMFKHPRFVHGAATSCHADVFAYAAAQVKKGIETAKELRAENYVFWGGREGYDTLLNTDMKRELDHMASFLHMAVDYAKEIGYTGQFLIEPKPKEPTTHQYDADAATSIAFLKQYGLDTHFKLNIEANHATLAGHTFEHELRVARIHGLLGSVDANQGNTLLGWDTDEFPTDLYATTLAMYEILQNGGLGTGGLNFDAKVRRASFELEDILYAHIAGMDAFAKGLRVAHRLIEDRVFEDVIKHRYRSFSEGIGRDISEGKANFHILEEYALKHPLIRNESGREEQLKARLNQYLLED.

Catalysis depends on residues histidine 107 and aspartate 110. Mg(2+) contacts are provided by glutamate 238, glutamate 274, histidine 277, aspartate 302, aspartate 313, aspartate 315, and aspartate 345.

It belongs to the xylose isomerase family. As to quaternary structure, homotetramer. Mg(2+) is required as a cofactor.

The protein resides in the cytoplasm. The catalysed reaction is alpha-D-xylose = alpha-D-xylulofuranose. The chain is Xylose isomerase from Bacillus pumilus (strain SAFR-032).